Here is a 233-residue protein sequence, read N- to C-terminus: Large ribosomal subunit protein uL1 (233 aa).

Belongs to the universal ribosomal protein uL1 family. As to quaternary structure, part of the 50S ribosomal subunit.

Its function is as follows. Binds directly to 23S rRNA. The L1 stalk is quite mobile in the ribosome, and is involved in E site tRNA release. In terms of biological role, protein L1 is also a translational repressor protein, it controls the translation of the L11 operon by binding to its mRNA. In Geotalea uraniireducens (strain Rf4) (Geobacter uraniireducens), this protein is Large ribosomal subunit protein uL1.